The primary structure comprises 505 residues: Trans-cinnamate 4-monooxygenase (505 aa).

The chain crosses the membrane as a helical span at residues 3–23; that stretch reads LILLEKSLLAVFFAVIFSIIV. (E)-cinnamate-binding positions include 213-218 and alanine 306; that span reads RSRLAQ. Cysteine 447 is a heme binding site.

The protein belongs to the cytochrome P450 family. Heme is required as a cofactor. In terms of tissue distribution, mostly expressed in stems, and, to a lower extent, in bulbs, roots, leaves and flowers.

It is found in the membrane. The catalysed reaction is (E)-cinnamate + reduced [NADPH--hemoprotein reductase] + O2 = (E)-4-coumarate + oxidized [NADPH--hemoprotein reductase] + H2O + H(+). It functions in the pathway alkaloid biosynthesis. It participates in phenylpropanoid metabolism; trans-4-coumarate biosynthesis; trans-4-coumarate from trans-cinnamate: step 1/1. In terms of biological role, catalyzes the first oxidative step of the phenylpropanoid pathway in higher plants by transforming trans-cinnamate into p-coumarate. The compounds formed by this pathway are essential components for lignification, pollination, and defense against ultraviolet light, predators and pathogens. Trans-4-coumarate is a precursor to all amaryllidaceae alkaloids such as galanthamine, lycorine and haemanthamine, and including haemanthamine- and crinamine-type alkaloids, promising anticancer agents. This is Trans-cinnamate 4-monooxygenase from Narcissus pseudonarcissus (Daffodil).